The following is a 680-amino-acid chain: Chaperone protein dnaK3 (680 aa).

At Thr205 the chain carries Phosphothreonine; by autocatalysis. Residues 640–680 (GRERRRDDDEDEWAEPPRTRRSRSYSQRADSAPWDDWDDDW) form a disordered region.

The protein belongs to the heat shock protein 70 family.

In terms of biological role, acts as a chaperone. The polypeptide is Chaperone protein dnaK3 (dnaK3) (Thermosynechococcus vestitus (strain NIES-2133 / IAM M-273 / BP-1)).